The sequence spans 450 residues: Ribosomal protein uS12 methylthiotransferase RimO (450 aa).

An MTTase N-terminal domain is found at 10–125; that stretch reads SRIALVSLGC…VVDIVRRAAT (116 aa). Residues cysteine 19, cysteine 54, cysteine 88, cysteine 162, cysteine 166, and cysteine 169 each coordinate [4Fe-4S] cluster. The 231-residue stretch at 148 to 378 folds into the Radical SAM core domain; it reads SGSPFTAYLK…AAVQREVSRA (231 aa). The TRAM domain maps to 381-447; the sequence is RARVGSEVTV…PYDLRARVLS (67 aa).

It belongs to the methylthiotransferase family. RimO subfamily. [4Fe-4S] cluster is required as a cofactor.

The protein resides in the cytoplasm. It catalyses the reaction L-aspartate(89)-[ribosomal protein uS12]-hydrogen + (sulfur carrier)-SH + AH2 + 2 S-adenosyl-L-methionine = 3-methylsulfanyl-L-aspartate(89)-[ribosomal protein uS12]-hydrogen + (sulfur carrier)-H + 5'-deoxyadenosine + L-methionine + A + S-adenosyl-L-homocysteine + 2 H(+). In terms of biological role, catalyzes the methylthiolation of an aspartic acid residue of ribosomal protein uS12. The polypeptide is Ribosomal protein uS12 methylthiotransferase RimO (Desulforudis audaxviator (strain MP104C)).